A 325-amino-acid chain; its full sequence is NADH-quinone oxidoreductase subunit H (325 aa).

Helical transmembrane passes span 11-31 (ILLS…CGAF), 81-101 (VIFT…FAIV), 114-134 (IGIL…LFAG), 154-174 (LSYE…AGSF), 186-206 (LWNV…GVAV), 237-257 (FFVG…TLFF), 265-285 (LPPF…FILI), and 304-324 (VCLP…LWQA).

Belongs to the complex I subunit 1 family. In terms of assembly, NDH-1 is composed of 13 different subunits. Subunits NuoA, H, J, K, L, M, N constitute the membrane sector of the complex.

Its subcellular location is the cell inner membrane. The catalysed reaction is a quinone + NADH + 5 H(+)(in) = a quinol + NAD(+) + 4 H(+)(out). Its function is as follows. NDH-1 shuttles electrons from NADH, via FMN and iron-sulfur (Fe-S) centers, to quinones in the respiratory chain. The immediate electron acceptor for the enzyme in this species is believed to be ubiquinone. Couples the redox reaction to proton translocation (for every two electrons transferred, four hydrogen ions are translocated across the cytoplasmic membrane), and thus conserves the redox energy in a proton gradient. This subunit may bind ubiquinone. The chain is NADH-quinone oxidoreductase subunit H from Klebsiella pneumoniae (strain 342).